Here is a 337-residue protein sequence, read N- to C-terminus: 15-cis-phytoene synthase (337 aa).

Belongs to the phytoene/squalene synthase family. The cofactor is ATP. Mn(2+) serves as cofactor. It depends on Mg(2+) as a cofactor.

It carries out the reaction 2 (2E,6E,10E)-geranylgeranyl diphosphate = 15-cis-phytoene + 2 diphosphate. It functions in the pathway carotenoid biosynthesis; phytoene biosynthesis. Involved in the biosynthesis of carotenoids. Catalyzes the condensation of two molecules of geranylgeranyl diphosphate (GGPP) to give prephytoene diphosphate (PPPP) and the subsequent rearrangement of the cyclopropylcarbinyl intermediate to yield 15-cis-phytoene. The sequence is that of 15-cis-phytoene synthase (crtB) from Synechocystis sp. (strain ATCC 27184 / PCC 6803 / Kazusa).